We begin with the raw amino-acid sequence, 83 residues long: Transmembrane protein EP84R (83 aa).

The next 2 helical transmembrane spans lie at 31 to 51 (IIGV…IIIL) and 59 to 79 (TGSI…FLIY).

Belongs to the asfivirus EP84R family.

It is found in the virion membrane. This is Transmembrane protein EP84R from Ornithodoros (relapsing fever ticks).